The primary structure comprises 247 residues: 5'-nucleotidase SurE (247 aa).

Positions 8, 9, 39, and 91 each coordinate a divalent metal cation.

It belongs to the SurE nucleotidase family. The cofactor is a divalent metal cation.

It localises to the cytoplasm. It carries out the reaction a ribonucleoside 5'-phosphate + H2O = a ribonucleoside + phosphate. In terms of biological role, nucleotidase that shows phosphatase activity on nucleoside 5'-monophosphates. The protein is 5'-nucleotidase SurE of Laribacter hongkongensis (strain HLHK9).